Reading from the N-terminus, the 343-residue chain is S-adenosylmethionine:tRNA ribosyltransferase-isomerase (343 aa).

This sequence belongs to the QueA family. As to quaternary structure, monomer.

It is found in the cytoplasm. It catalyses the reaction 7-aminomethyl-7-carbaguanosine(34) in tRNA + S-adenosyl-L-methionine = epoxyqueuosine(34) in tRNA + adenine + L-methionine + 2 H(+). The protein operates within tRNA modification; tRNA-queuosine biosynthesis. Transfers and isomerizes the ribose moiety from AdoMet to the 7-aminomethyl group of 7-deazaguanine (preQ1-tRNA) to give epoxyqueuosine (oQ-tRNA). The protein is S-adenosylmethionine:tRNA ribosyltransferase-isomerase of Enterococcus faecalis (strain ATCC 700802 / V583).